Consider the following 259-residue polypeptide: Ribosomal RNA small subunit methyltransferase A (259 aa).

Positions 13, 15, 40, 61, 85, and 103 each coordinate S-adenosyl-L-methionine.

The protein belongs to the class I-like SAM-binding methyltransferase superfamily. rRNA adenine N(6)-methyltransferase family. RsmA subfamily.

It is found in the cytoplasm. The catalysed reaction is adenosine(1518)/adenosine(1519) in 16S rRNA + 4 S-adenosyl-L-methionine = N(6)-dimethyladenosine(1518)/N(6)-dimethyladenosine(1519) in 16S rRNA + 4 S-adenosyl-L-homocysteine + 4 H(+). Specifically dimethylates two adjacent adenosines (A1518 and A1519) in the loop of a conserved hairpin near the 3'-end of 16S rRNA in the 30S particle. May play a critical role in biogenesis of 30S subunits. The protein is Ribosomal RNA small subunit methyltransferase A of Neisseria meningitidis serogroup C / serotype 2a (strain ATCC 700532 / DSM 15464 / FAM18).